An 89-amino-acid chain; its full sequence is Small ribosomal subunit protein uS15 (89 aa).

Belongs to the universal ribosomal protein uS15 family. In terms of assembly, part of the 30S ribosomal subunit. Forms a bridge to the 50S subunit in the 70S ribosome, contacting the 23S rRNA.

One of the primary rRNA binding proteins, it binds directly to 16S rRNA where it helps nucleate assembly of the platform of the 30S subunit by binding and bridging several RNA helices of the 16S rRNA. Its function is as follows. Forms an intersubunit bridge (bridge B4) with the 23S rRNA of the 50S subunit in the ribosome. In Ligilactobacillus salivarius (strain UCC118) (Lactobacillus salivarius), this protein is Small ribosomal subunit protein uS15.